Consider the following 89-residue polypeptide: MALTTEEKKVVLGEYGLHETDTGSPEAQVAMLTKRITDLTEHLKTHKHDHHSRRGLLLMVGRRRRLLKYVAKTDVARYRTLIERLGLRR.

It belongs to the universal ribosomal protein uS15 family. In terms of assembly, part of the 30S ribosomal subunit. Forms a bridge to the 50S subunit in the 70S ribosome, contacting the 23S rRNA.

Its function is as follows. One of the primary rRNA binding proteins, it binds directly to 16S rRNA where it helps nucleate assembly of the platform of the 30S subunit by binding and bridging several RNA helices of the 16S rRNA. In terms of biological role, forms an intersubunit bridge (bridge B4) with the 23S rRNA of the 50S subunit in the ribosome. The protein is Small ribosomal subunit protein uS15 of Rhodococcus erythropolis (strain PR4 / NBRC 100887).